The chain runs to 237 residues: Segregation and condensation protein A (237 aa).

Belongs to the ScpA family. As to quaternary structure, component of a cohesin-like complex composed of ScpA, ScpB and the Smc homodimer, in which ScpA and ScpB bind to the head domain of Smc. The presence of the three proteins is required for the association of the complex with DNA.

It is found in the cytoplasm. Functionally, participates in chromosomal partition during cell division. May act via the formation of a condensin-like complex containing Smc and ScpB that pull DNA away from mid-cell into both cell halves. The protein is Segregation and condensation protein A of Streptococcus thermophilus (strain ATCC BAA-250 / LMG 18311).